Reading from the N-terminus, the 440-residue chain is tRNA-2-methylthio-N(6)-dimethylallyladenosine synthase (440 aa).

In terms of domain architecture, MTTase N-terminal spans K4–E122. [4Fe-4S] cluster is bound by residues C13, C49, C83, C159, C163, and C166. In terms of domain architecture, Radical SAM core spans R145 to E375. The TRAM domain occupies K378–V440.

It belongs to the methylthiotransferase family. MiaB subfamily. As to quaternary structure, monomer. [4Fe-4S] cluster serves as cofactor.

The protein resides in the cytoplasm. It carries out the reaction N(6)-dimethylallyladenosine(37) in tRNA + (sulfur carrier)-SH + AH2 + 2 S-adenosyl-L-methionine = 2-methylsulfanyl-N(6)-dimethylallyladenosine(37) in tRNA + (sulfur carrier)-H + 5'-deoxyadenosine + L-methionine + A + S-adenosyl-L-homocysteine + 2 H(+). In terms of biological role, catalyzes the methylthiolation of N6-(dimethylallyl)adenosine (i(6)A), leading to the formation of 2-methylthio-N6-(dimethylallyl)adenosine (ms(2)i(6)A) at position 37 in tRNAs that read codons beginning with uridine. This is tRNA-2-methylthio-N(6)-dimethylallyladenosine synthase from Carboxydothermus hydrogenoformans (strain ATCC BAA-161 / DSM 6008 / Z-2901).